The following is a 217-amino-acid chain: Adapter protein MecA (217 aa).

This sequence belongs to the MecA family. As to quaternary structure, homodimer.

Its function is as follows. Enables the recognition and targeting of unfolded and aggregated proteins to the ClpC protease or to other proteins involved in proteolysis. The chain is Adapter protein MecA from Listeria welshimeri serovar 6b (strain ATCC 35897 / DSM 20650 / CCUG 15529 / CIP 8149 / NCTC 11857 / SLCC 5334 / V8).